A 172-amino-acid polypeptide reads, in one-letter code: NADH-ubiquinone oxidoreductase chain 6 (172 aa).

The next 5 helical transmembrane spans lie at 1–21 (MTYFMFLLLMALVVGLVAVAS), 25–45 (PYFAALGLVVAAGVGCGVLVG), 53–73 (LVLFLIYLGGMLVVFAYAALA), 86–106 (VLGYVLVYLLGVGLVAGIFWG), and 140–160 (GGMLVICAWVLLLTLLVVLEL).

It belongs to the complex I subunit 6 family.

It localises to the mitochondrion membrane. The enzyme catalyses a ubiquinone + NADH + 5 H(+)(in) = a ubiquinol + NAD(+) + 4 H(+)(out). In terms of biological role, core subunit of the mitochondrial membrane respiratory chain NADH dehydrogenase (Complex I) that is believed to belong to the minimal assembly required for catalysis. Complex I functions in the transfer of electrons from NADH to the respiratory chain. The immediate electron acceptor for the enzyme is believed to be ubiquinone. The chain is NADH-ubiquinone oxidoreductase chain 6 (MT-ND6) from Cyprinus carpio (Common carp).